A 372-amino-acid polypeptide reads, in one-letter code: L-selectin (372 aa).

The signal sequence occupies residues 1 to 28 (MVFPWRCEGTYWGSRNILKLWVWTLLCC). A propeptide spanning residues 29 to 38 (DFLIHHGTHC) is cleaved from the precursor. At 39–332 (WTYHYSEKPM…FSKIKEGDYN (294 aa)) the chain is on the extracellular side. The 101-residue stretch at 55–155 (KFCKQNYTDL…ACHKRKAALC (101 aa)) folds into the C-type lectin domain. Cystine bridges form between Cys-57–Cys-155, Cys-128–Cys-147, Cys-128–Cys-160, Cys-160–Cys-171, Cys-165–Cys-180, Cys-182–Cys-191, Cys-197–Cys-241, Cys-227–Cys-254, Cys-259–Cys-303, and Cys-289–Cys-316. N-linked (GlcNAc...) asparagine glycans are attached at residues Asn-60 and Asn-104. The Ca(2+) site is built by Glu-118, Asn-120, Glu-126, Asn-143, and Asp-144. The EGF-like domain occupies 156-192 (YTASCQPGSCNGRGECVETINNHTCICDAGYYGPQCQ). Residue Asn-177 is glycosylated (N-linked (GlcNAc...) asparagine). 2 Sushi domains span residues 195–256 (VQCE…ICQV) and 257–318 (VQCE…ICQE). N-linked (GlcNAc...) asparagine glycans are attached at residues Asn-216, Asn-226, Asn-246, Asn-278, Asn-288, Asn-308, and Asn-320. A helical membrane pass occupies residues 333-355 (PLFIPVAVMVTAFSGLAFLIWLA). Topologically, residues 356-372 (RRLKKGKKSQERMDDPY) are cytoplasmic.

This sequence belongs to the selectin/LECAM family. As to quaternary structure, interaction with SELPLG/PSGL1 and PODXL2 is required for promoting recruitment and rolling of leukocytes. This interaction is dependent on the sialyl Lewis X glycan modification of SELPLG and PODXL2, and tyrosine sulfation modifications of SELPLG. Sulfation on 'Tyr-51' of SELPLG is important for L-selectin binding. In terms of processing, N-glycosylated. In terms of tissue distribution, predominantly expressed in lymphoid tissue.

It localises to the cell membrane. Calcium-dependent lectin that mediates cell adhesion by binding to glycoproteins on neighboring cells. Mediates the adherence of lymphocytes to endothelial cells of high endothelial venules in peripheral lymph nodes. Promotes initial tethering and rolling of leukocytes in endothelia. The sequence is that of L-selectin (Sell) from Mus musculus (Mouse).